A 744-amino-acid chain; its full sequence is Prestin (744 aa).

Residues 1-79 (MDHAEENEIP…WLPAYKFKEY (79 aa)) lie on the Cytoplasmic side of the membrane. The chain crosses the membrane as a helical span at residues 80–105 (VLGDLVSGISTGVLQLPQGLAFAMLA). Residues 106–109 (AVPP) lie on the Extracellular side of the membrane. A helical membrane pass occupies residues 110–125 (VFGLYSSFYPVIMYCF). Topologically, residues 126–137 (FGTSRHISIGPF) are cytoplasmic. The chain crosses the membrane as a helical span at residues 138–147 (AVISLMIGGV). Topologically, residues 148-178 (AVRLVPDDIVIPGGVNATNGTEARDALRVKV) are extracellular. Residues 158-168 (IPGGVNATNGT) carry the Involved in motor function motif. Residues N163 and N166 are each glycosylated (N-linked (GlcNAc...) asparagine). Residues 179-196 (AMSVTLLSGIIQFCLGVC) traverse the membrane as a helical segment. Topologically, residues 197–208 (RFGFVAIYLTEP) are cytoplasmic. A helical membrane pass occupies residues 209-230 (LVRGFTTAAAVHVFTSMLKYLF). Residues 231–243 (GVKTKRYSGIFSV) are Extracellular-facing. Positions 244–252 (VYSTVAVLQ) form an intramembrane region, helical. The Extracellular portion of the chain corresponds to 253 to 258 (NVKNLN). A helical transmembrane segment spans residues 259–282 (VCSLGVGLMVFGLLLGGKEFNERF). At 283 to 291 (KEKLPAPIP) the chain is on the cytoplasmic side. The helical transmembrane segment at 292-304 (LEFFAVVMGTGIS) threads the bilayer. Topologically, residues 305–337 (AGFNLHESYSVDVVGTLPLGLLPPANPDTSLFH) are extracellular. The helical transmembrane segment at 338-361 (LVYVDAIAIAIVGFSVTISMAKTL) threads the bilayer. The Cytoplasmic portion of the chain corresponds to 362 to 370 (ANKHGYQVD). The chain crosses the membrane as a helical span at residues 371-388 (GNQELIALGICNSIGSLF). At 389–396 (QTFSISCS) the chain is on the extracellular side. A helical membrane pass occupies residues 397–406 (LSRSLVQEGT). S398 provides a ligand contact to salicylate. The Cytoplasmic portion of the chain corresponds to 407-410 (GGKT). A helical transmembrane segment spans residues 411–429 (QLAGCLASLMILLVILATG). At 430–436 (FLFESLP) the chain is on the extracellular side. A helical transmembrane segment spans residues 437–455 (QAVLSAIVIVNLKGMFMQF). At 456-469 (SDLPFFWRTSKIEL) the chain is on the cytoplasmic side. The helical transmembrane segment at 470–484 (TIWLTTFVSSLFLGL) threads the bilayer. A topological domain (extracellular) is located at residue D485. The helical transmembrane segment at 486-497 (YGLITAVIIALL) threads the bilayer. Over 498–744 (TVIYRTQSPS…PNATPTTPEA (247 aa)) the chain is Cytoplasmic. The extended region for STAS domain stretch occupies residues 505–718 (SPSYKVLGQL…AVLGSHVREA (214 aa)). An STAS domain is found at 525–713 (AYEEVKEIPG…HSIHDAVLGS (189 aa)). The tract at residues 717-744 (EAMAEQEASAPPPQDDMEPNATPTTPEA) is disordered.

This sequence belongs to the SLC26A/SulP transporter (TC 2.A.53) family. In terms of assembly, homodimer. Interacts (via STAS domain) with CALM; this interaction is calcium-dependent and the STAS domain interacts with only one lobe of CALM which is an elongated conformation. Interacts with MYH1. Highly expressed in mature outer hair cells, but not in inner hair cells or other cells of the basilar membrane and the organ of Corti.

It is found in the lateral cell membrane. It catalyses the reaction 2 hydrogencarbonate(in) + chloride(out) = 2 hydrogencarbonate(out) + chloride(in). Functionally, voltage-sensitive motor protein that drives outer hair cell (OHC) electromotility (eM) and participates in sound amplification in the hearing organ. Converts changes in the transmembrane electric potential into mechanical displacements resulting in the coupling of its expansion to movement of a charged voltage sensor across the lipid membrane. The nature of the voltage sensor is not completely clear, and two models compete. In the first model, acts as an incomplete transporter where intracellular chloride anion acts as extrinsic voltage sensor that drives conformational change in the protein which is sufficient to produce a length change in the plane of the membrane and hence in the length of the OHC. The second model in which multiple charged amino acid residues are distributed at the intracellular and extracellular membrane interfaces that form an intrinsic voltage sensor, whose movement produces the non-linear capacitance (NLC). However, the effective voltage sensor may be the result of a hybrid voltage sensor assembled from intrinsic charge (charged residues) and extrinsic charge (bound anion). Notably, binding of anions to the anion-binding pocket partially neutralizes the intrinsic positive charge rather than to form an electrically negative sensor, therefore remaining charge may serve as voltage sensor that, after depolarization, moves from down (expanded state) to up (contracted) conformation, which is accompanied by an eccentric contraction of the intermembrane cross-sectional area of the protein as well as a major increase in the hydrophobic thickness of the protein having as consequences the plasma membrane thickening and the cell contraction after membrane depolarization. The anion-binding pocket transits from the inward-open (Down) state, where it is exposed toward the intracellular solvent in the absence of anion, to the occluded (Up) state upon anion binding. Salicylate competes for the anion-binding site and inhibits the voltage-sensor movement, and therefore inhibits the charge transfer and electromotility by displacing Cl(-) from the anion-binding site and by preventing the structural transitions to the contracted state. In addition, can act as a weak Cl(-)/HCO3 (-) antiporter across the cell membrane and so regulate the intracellular pH of the outer hair cells (OHCs), while firstly found as being unable to mediate electrogenic anion transport. Moreover, supports a role in cardiac mechanical amplification serving as an elastic element to enhance the actomyosin- based sarcomere contraction system. The sequence is that of Prestin from Meriones unguiculatus (Mongolian jird).